A 280-amino-acid chain; its full sequence is Protein IMPACT homolog (280 aa).

Residues 9-109 (DELLALESIY…QAAAERESKL (101 aa)) form the RWD domain.

It belongs to the IMPACT family. As to quaternary structure, interacts (via N-terminus) with gcn1 (via C-terminus); this interaction reduces the gcn1-gcn20 complex formation and prevents the interaction of gcn1 with gcn2 protein kinase and gcn2 activation in amino acid-starved cells. Interacts (via C-terminus) with act1; this interaction occurs in a gcn1-independent manner. Interacts with rpl39; this interaction occurs in a gcn1-independent manner. Associates (via middle region) with ribosomes; this association occurs in a gcn1-independent manner and persists under amino acid starvation conditions.

It localises to the cytoplasm. The protein resides in the nucleus. In terms of biological role, translational regulator that ensures constant high levels of translation under amino acid starvation. Plays a role as a negative regulator of the gcn2 kinase activity; impairs gcn1-mediated gcn2 activation, and hence gcn2-mediated eIF-2-alpha phosphorylation in amino acid-starved cells and subsequent down-regulation of protein synthesis. In normal conditions, it resides in a actin complex and has no activity. The chain is Protein IMPACT homolog (yih1) from Schizosaccharomyces pombe (strain 972 / ATCC 24843) (Fission yeast).